Here is a 447-residue protein sequence, read N- to C-terminus: SPARC-related modular calcium-binding protein 2 (447 aa).

The signal sequence occupies residues 1-21 (MLPPQLCWLPLLAALLPPVPA). Positions 34–86 (QDKDRDCSLDCPSSPQKPLCASDGRTFLSRCEFQRAKCKDPQLEIAHRGNCKD) constitute a Kazal-like domain. 6 disulfides stabilise this stretch: C40–C71, C44–C64, C53–C84, C90–C113, C124–C131, and C133–C153. One can recognise a Thyroglobulin type-1 1 domain in the interval 87-153 (VSRCVAERKY…TAVAHKTPRC (67 aa)). Residues 147 to 230 (AHKTPRCPGS…QSALEEAKQP (84 aa)) are disordered. Residues 161 to 172 (VPQREGAGKADD) show a composition bias toward basic and acidic residues. N-linked (GlcNAc...) asparagine glycosylation is present at N206. Over residues 206–216 (NKTNKNSASSC) the composition is skewed to polar residues. Positions 213 to 281 (ASSCDQEHQS…TSTRYEQPKC (69 aa)) constitute a Thyroglobulin type-1 2 domain. Cystine bridges form between C216-C240, C251-C258, and C260-C281. The segment covering 217–230 (DQEHQSALEEAKQP) has biased composition (basic and acidic residues). 2 consecutive EF-hand domains span residues 347–382 (LEER…LRKK) and 384–419 (KPKK…TREE). Ca(2+)-binding residues include D360, N362, S364, D366, E371, D397, N399, D401, S403, and E408. N-linked (GlcNAc...) asparagine glycosylation is present at N362. The segment at 416–447 (TREEGKANTRKRHTPRGNAESSSSNRQPRKQG) is disordered.

As to quaternary structure, binds various proteins from the extracellular matrix. Post-translationally, N-glycosylated. Strongly expressed in ovary, followed by heart, muscle, spleen, brain, thymus, lung, liver, kidney, spleen, testis, ovary and skeletal muscle.

The protein localises to the secreted. It is found in the extracellular space. It localises to the extracellular matrix. The protein resides in the basement membrane. Can stimulate endothelial cell proliferation, migration, as well as angiogenesis. Promotes matrix assembly and cell adhesiveness. This chain is SPARC-related modular calcium-binding protein 2 (Smoc2), found in Mus musculus (Mouse).